The following is a 266-amino-acid chain: Putative pyruvate, phosphate dikinase regulatory protein (266 aa).

147-154 (GLSRTSKT) serves as a coordination point for ADP.

Belongs to the pyruvate, phosphate/water dikinase regulatory protein family. PDRP subfamily.

It catalyses the reaction N(tele)-phospho-L-histidyl/L-threonyl-[pyruvate, phosphate dikinase] + ADP = N(tele)-phospho-L-histidyl/O-phospho-L-threonyl-[pyruvate, phosphate dikinase] + AMP + H(+). It carries out the reaction N(tele)-phospho-L-histidyl/O-phospho-L-threonyl-[pyruvate, phosphate dikinase] + phosphate + H(+) = N(tele)-phospho-L-histidyl/L-threonyl-[pyruvate, phosphate dikinase] + diphosphate. Bifunctional serine/threonine kinase and phosphorylase involved in the regulation of the pyruvate, phosphate dikinase (PPDK) by catalyzing its phosphorylation/dephosphorylation. The sequence is that of Putative pyruvate, phosphate dikinase regulatory protein from Clostridium perfringens (strain SM101 / Type A).